Consider the following 221-residue polypeptide: Adenylate kinase (221 aa).

Residue Gly10 to Thr15 participates in ATP binding. The interval Ser30 to Val59 is NMP. AMP contacts are provided by residues Thr31, Arg36, Gly57 to Val59, Gly85 to Arg88, and Gln92. The segment at Gly122–Asp159 is LID. Residues Arg123 and Thr132 to Tyr133 contribute to the ATP site. Residues Arg156 and Arg167 each coordinate AMP. Gly207 lines the ATP pocket.

Belongs to the adenylate kinase family. As to quaternary structure, monomer.

It is found in the cytoplasm. The enzyme catalyses AMP + ATP = 2 ADP. The protein operates within purine metabolism; AMP biosynthesis via salvage pathway; AMP from ADP: step 1/1. Its function is as follows. Catalyzes the reversible transfer of the terminal phosphate group between ATP and AMP. Plays an important role in cellular energy homeostasis and in adenine nucleotide metabolism. This chain is Adenylate kinase, found in Cupriavidus necator (strain ATCC 17699 / DSM 428 / KCTC 22496 / NCIMB 10442 / H16 / Stanier 337) (Ralstonia eutropha).